The primary structure comprises 218 residues: Thiopurine S-methyltransferase (218 aa).

W10, L45, E66, and R123 together coordinate S-adenosyl-L-methionine.

It belongs to the class I-like SAM-binding methyltransferase superfamily. TPMT family.

It is found in the cytoplasm. The catalysed reaction is S-adenosyl-L-methionine + a thiopurine = S-adenosyl-L-homocysteine + a thiopurine S-methylether.. This chain is Thiopurine S-methyltransferase, found in Pseudomonas aeruginosa (strain LESB58).